A 177-amino-acid polypeptide reads, in one-letter code: NAD(P)H-quinone oxidoreductase subunit 6, chloroplastic (177 aa).

The next 5 helical transmembrane spans lie at 10-30 (IFLVFLGSGLILGGLGVVLLT), 32-52 (PVYSAFSLGLVLVCISLFHIP), 61-81 (AQLLIYVGAINVLIVFAVMFM), 92-112 (LWTVGDGVTSLICTSILFSLI), and 152-172 (FYLPFELISIILLVALVGAIA).

This sequence belongs to the complex I subunit 6 family. As to quaternary structure, NDH is composed of at least 16 different subunits, 5 of which are encoded in the nucleus.

It is found in the plastid. Its subcellular location is the chloroplast thylakoid membrane. It catalyses the reaction a plastoquinone + NADH + (n+1) H(+)(in) = a plastoquinol + NAD(+) + n H(+)(out). The enzyme catalyses a plastoquinone + NADPH + (n+1) H(+)(in) = a plastoquinol + NADP(+) + n H(+)(out). Its function is as follows. NDH shuttles electrons from NAD(P)H:plastoquinone, via FMN and iron-sulfur (Fe-S) centers, to quinones in the photosynthetic chain and possibly in a chloroplast respiratory chain. The immediate electron acceptor for the enzyme in this species is believed to be plastoquinone. Couples the redox reaction to proton translocation, and thus conserves the redox energy in a proton gradient. The chain is NAD(P)H-quinone oxidoreductase subunit 6, chloroplastic (ndhG) from Illicium oligandrum (Star anise).